A 379-amino-acid polypeptide reads, in one-letter code: Lipoyl synthase 2, mitochondrial (379 aa).

Residues C106, C111, C117, C137, C141, C144, and S352 each contribute to the [4Fe-4S] cluster site. A Radical SAM core domain is found at 122–341 (EHGTQTATIM…EERGNELGFL (220 aa)).

It belongs to the radical SAM superfamily. Lipoyl synthase family. The cofactor is [4Fe-4S] cluster.

It localises to the mitochondrion. It catalyses the reaction [[Fe-S] cluster scaffold protein carrying a second [4Fe-4S](2+) cluster] + N(6)-octanoyl-L-lysyl-[protein] + 2 oxidized [2Fe-2S]-[ferredoxin] + 2 S-adenosyl-L-methionine + 4 H(+) = [[Fe-S] cluster scaffold protein] + N(6)-[(R)-dihydrolipoyl]-L-lysyl-[protein] + 4 Fe(3+) + 2 hydrogen sulfide + 2 5'-deoxyadenosine + 2 L-methionine + 2 reduced [2Fe-2S]-[ferredoxin]. It participates in protein modification; protein lipoylation via endogenous pathway; protein N(6)-(lipoyl)lysine from octanoyl-[acyl-carrier-protein]: step 2/2. In terms of biological role, catalyzes the radical-mediated insertion of two sulfur atoms into the C-6 and C-8 positions of the octanoyl moiety bound to the lipoyl domains of lipoate-dependent enzymes, thereby converting the octanoylated domains into lipoylated derivatives. The polypeptide is Lipoyl synthase 2, mitochondrial (Drosophila yakuba (Fruit fly)).